The chain runs to 449 residues: Glucose-6-phosphate isomerase (449 aa).

Residue glutamate 291 is the Proton donor of the active site. Catalysis depends on residues histidine 312 and lysine 426.

Belongs to the GPI family.

It localises to the cytoplasm. The catalysed reaction is alpha-D-glucose 6-phosphate = beta-D-fructose 6-phosphate. It participates in carbohydrate biosynthesis; gluconeogenesis. It functions in the pathway carbohydrate degradation; glycolysis; D-glyceraldehyde 3-phosphate and glycerone phosphate from D-glucose: step 2/4. In terms of biological role, catalyzes the reversible isomerization of glucose-6-phosphate to fructose-6-phosphate. The protein is Glucose-6-phosphate isomerase of Streptococcus pyogenes serotype M18 (strain MGAS8232).